Reading from the N-terminus, the 137-residue chain is Lysozyme (137 aa).

The signal sequence occupies residues 1 to 20; the sequence is MSAVLVLALVLLSLTCVTDA. Positions 21-134 constitute an I-type lysozyme domain; the sequence is ISDACLTCIC…WNAVKNQGCS (114 aa). 6 cysteine pairs are disulfide-bonded: Cys-25–Cys-102, Cys-30–Cys-37, Cys-42–Cys-51, Cys-64–Cys-84, Cys-74–Cys-80, and Cys-98–Cys-116. Glu-33 serves as the catalytic Proton donor. Asp-45 (nucleophile) is an active-site residue. 57 to 63 provides a ligand contact to substrate; sequence KKSYWID. Substrate contacts are provided by residues Tyr-88 and 109 to 111; that span reads HNG.

The protein belongs to the glycosyl hydrolase 22 family. Type-I lysozyme subfamily.

The protein resides in the secreted. The catalysed reaction is Hydrolysis of (1-&gt;4)-beta-linkages between N-acetylmuramic acid and N-acetyl-D-glucosamine residues in a peptidoglycan and between N-acetyl-D-glucosamine residues in chitodextrins.. Has bacteriolytic activity. May play a role in digestion and in the host defense mechanisms against invading microbes. In Ostrea edulis (Native oyster), this protein is Lysozyme (lysoz).